The chain runs to 320 residues: Probable serine proteinase inhibitor 1 (320 aa).

It belongs to the serpin family. Poxviruses subfamily.

The polypeptide is Probable serine proteinase inhibitor 1 (SPI-1) (Swinepox virus (strain Kasza) (SWPV)).